A 373-amino-acid polypeptide reads, in one-letter code: Histone-lysine N-methyltransferase SETD7 (373 aa).

The segment at 1–20 (MDSDDDNMEEVVEGPLDEDD) is disordered. MORN repeat units lie at residues 36 to 58 (FEGH…DGST), 59 to 81 (LEGF…DGGA), and 106 to 128 (FRGR…DGAC). Residues 214-336 (QRVYVGQSLI…KDEELTVAYG (123 aa)) enclose the SET domain. S-adenosyl-L-methionine-binding positions include 226–228 (AGE), N296, and H297.

It belongs to the class V-like SAM-binding methyltransferase superfamily. Histone-lysine methyltransferase family. SET7 subfamily.

The protein localises to the nucleus. Its subcellular location is the chromosome. The catalysed reaction is L-lysyl(4)-[histone H3] + S-adenosyl-L-methionine = N(6)-methyl-L-lysyl(4)-[histone H3] + S-adenosyl-L-homocysteine + H(+). It catalyses the reaction L-lysyl-[protein] + S-adenosyl-L-methionine = N(6)-methyl-L-lysyl-[protein] + S-adenosyl-L-homocysteine + H(+). Its function is as follows. Histone methyltransferase that specifically monomethylates 'Lys-4' of histone H3. H3 'Lys-4' methylation represents a specific tag for epigenetic transcriptional activation. Plays a central role in the transcriptional activation of genes. Also has methyltransferase activity toward non-histone proteins. The polypeptide is Histone-lysine N-methyltransferase SETD7 (setd7) (Danio rerio (Zebrafish)).